The sequence spans 414 residues: Esterase FrsA (414 aa).

This sequence belongs to the FrsA family.

It catalyses the reaction a carboxylic ester + H2O = an alcohol + a carboxylate + H(+). Its function is as follows. Catalyzes the hydrolysis of esters. This Escherichia coli O7:K1 (strain IAI39 / ExPEC) protein is Esterase FrsA.